The sequence spans 88 residues: Small ribosomal subunit protein bS20 (88 aa).

2 disordered regions span residues 1 to 23 (MANS…HNAA) and 69 to 88 (PNKA…AMAA). Residues 69–81 (PNKAARHKSRLNT) are compositionally biased toward basic residues.

Belongs to the bacterial ribosomal protein bS20 family.

Functionally, binds directly to 16S ribosomal RNA. The polypeptide is Small ribosomal subunit protein bS20 (Alcanivorax borkumensis (strain ATCC 700651 / DSM 11573 / NCIMB 13689 / SK2)).